A 329-amino-acid chain; its full sequence is Adenylate isopentenyltransferase (329 aa).

ATP is bound by residues 37–44 (GATGTGKS), K63, T74, 129–131 (SNS), 220–222 (KAI), and K313.

The protein belongs to the IPP transferase family. Requires Mg(2+) as cofactor. As to expression, expressed in roots, stems, leaves and cones.

The enzyme catalyses dimethylallyl diphosphate + AMP = N(6)-(dimethylallyl)adenosine 5'-phosphate + diphosphate. The catalysed reaction is dimethylallyl diphosphate + ADP = N(6)-(dimethylallyl)adenosine 5'-diphosphate + diphosphate. It carries out the reaction dimethylallyl diphosphate + ATP = N(6)-(dimethylallyl)adenosine 5'-triphosphate + diphosphate. In terms of biological role, involved in cytokinin biosynthesis. Catalyzes the transfer of an isopentenyl group from dimethylallyl diphosphate (DMAPP) to ATP, ADP and AMP. GMP, IMP, CMP or UMP are not used as substrates. This is Adenylate isopentenyltransferase from Humulus lupulus (European hop).